We begin with the raw amino-acid sequence, 70 residues long: Large ribosomal subunit protein bL31 (70 aa).

This sequence belongs to the bacterial ribosomal protein bL31 family. Type A subfamily. In terms of assembly, part of the 50S ribosomal subunit.

Binds the 23S rRNA. The chain is Large ribosomal subunit protein bL31 from Mycoplasma mobile (strain ATCC 43663 / 163K / NCTC 11711) (Mesomycoplasma mobile).